A 296-amino-acid polypeptide reads, in one-letter code: Nucleotide-binding protein spyM18_0713 (296 aa).

An ATP-binding site is contributed by 13–20 (GMSGAGKT). Residue 63-66 (DMRS) coordinates GTP.

This sequence belongs to the RapZ-like family.

Its function is as follows. Displays ATPase and GTPase activities. The chain is Nucleotide-binding protein spyM18_0713 from Streptococcus pyogenes serotype M18 (strain MGAS8232).